The sequence spans 196 residues: NADH-quinone oxidoreductase subunit I (196 aa).

4Fe-4S ferredoxin-type domains follow at residues 54-84 and 104-133; these read LNRW…VEGA and RVYQ…MTNE. Cys64, Cys67, Cys70, Cys74, Cys113, Cys116, Cys119, and Cys123 together coordinate [4Fe-4S] cluster.

This sequence belongs to the complex I 23 kDa subunit family. As to quaternary structure, NDH-1 is composed of 14 different subunits. Subunits NuoA, H, J, K, L, M, N constitute the membrane sector of the complex. [4Fe-4S] cluster is required as a cofactor.

The protein localises to the cell membrane. It catalyses the reaction a quinone + NADH + 5 H(+)(in) = a quinol + NAD(+) + 4 H(+)(out). NDH-1 shuttles electrons from NADH, via FMN and iron-sulfur (Fe-S) centers, to quinones in the respiratory chain. The immediate electron acceptor for the enzyme in this species is believed to be ubiquinone. Couples the redox reaction to proton translocation (for every two electrons transferred, four hydrogen ions are translocated across the cytoplasmic membrane), and thus conserves the redox energy in a proton gradient. The chain is NADH-quinone oxidoreductase subunit I from Nocardioides sp. (strain ATCC BAA-499 / JS614).